The following is a 327-amino-acid chain: Immediate early response gene 5 protein (327 aa).

2 disordered regions span residues 59–166 and 227–313; these read GPAG…GVFP and GPAG…DKPV. The segment covering 71 to 84 has biased composition (low complexity); that stretch reads QPGEPAAGPPAGWG. A compositionally biased stretch (acidic residues) spans 253-262; the sequence is GEDDDAEEME. A compositionally biased stretch (polar residues) spans 265–278; that stretch reads NVANLISIFGSSFS.

The protein belongs to the IER family. As to quaternary structure, monomer. Homodimer. Associates with the catalytic subunit of protein phosphatase PP2A. Interacts (via N- and C-terminal regions) with PPP2R2B. Interacts with PPP2R2A, PPP2R2C and PPP2R2D. Interacts (via N-terminus) with RPS6KB1. Interacts (via central region) with HSF1; this interaction promotes PPP2CA-induced HSF1 dephosphorylation, leading to enhanced HSF1 transcriptional activity. As to expression, expressed in acute myeloid leukemia (AML) cells.

The protein resides in the nucleus. It is found in the cytoplasm. In terms of biological role, plays a role as a transcription factor. Mediates positive transcriptional regulation of several chaperone genes during the heat shock response in a HSF1-dependent manner. Mediates negative transcriptional regulation of CDC25B expression. Plays a role in the dephosphorylation of the heat shock factor HSF1 and ribosomal protein S6 kinase (S6K) by the protein phosphatase PP2A. Involved in the regulation of cell proliferation and resistance to thermal stress. Involved in the cell cycle checkpoint and survival in response to ionizing radiation. Associates with chromatin to the CDC25B promoter. This Homo sapiens (Human) protein is Immediate early response gene 5 protein (IER5).